Reading from the N-terminus, the 656-residue chain is L-type lectin-domain containing receptor kinase S.1 (656 aa).

A signal peptide spans 1 to 29; the sequence is MSWQWRRRQWPSPLLLILIVLHLVSSSSA. The legume-lectin like stretch occupies residues 30-273; that stretch reads IDFLYNSFSS…ARRILAWSLS (244 aa). Residues 30 to 304 are Extracellular-facing; it reads IDFLYNSFSS…SSSLSTGAIA (275 aa). 8 N-linked (GlcNAc...) asparagine glycosylation sites follow: Asn42, Asn63, Asn121, Asn139, Asn191, Asn219, Asn282, and Asn293. The chain crosses the membrane as a helical span at residues 305–325; sequence GIVIGCVVFVALIGFGGYLIW. Topologically, residues 326–656 are cytoplasmic; sequence KKLMREEEEE…AAADSTAAHA (331 aa). The Protein kinase domain maps to 361–639; that stretch reads FSNDRLLGSG…LLGSPQEDLL (279 aa). Residues 367 to 375 and Lys389 each bind ATP; that span reads LGSGGFGKV. Asp485 acts as the Proton acceptor in catalysis.

This sequence in the C-terminal section; belongs to the protein kinase superfamily. Ser/Thr protein kinase family. The protein in the N-terminal section; belongs to the leguminous lectin family.

The protein resides in the cell membrane. It catalyses the reaction L-seryl-[protein] + ATP = O-phospho-L-seryl-[protein] + ADP + H(+). The enzyme catalyses L-threonyl-[protein] + ATP = O-phospho-L-threonyl-[protein] + ADP + H(+). Functionally, involved in resistance response to the pathogenic oomycetes Phytophthora infestans and Phytophthora capsici and to the pathogenic bacteria Pseudomonas syringae. The protein is L-type lectin-domain containing receptor kinase S.1 of Arabidopsis thaliana (Mouse-ear cress).